Reading from the N-terminus, the 156-residue chain is SsrA-binding protein (156 aa).

The protein belongs to the SmpB family.

It is found in the cytoplasm. Required for rescue of stalled ribosomes mediated by trans-translation. Binds to transfer-messenger RNA (tmRNA), required for stable association of tmRNA with ribosomes. tmRNA and SmpB together mimic tRNA shape, replacing the anticodon stem-loop with SmpB. tmRNA is encoded by the ssrA gene; the 2 termini fold to resemble tRNA(Ala) and it encodes a 'tag peptide', a short internal open reading frame. During trans-translation Ala-aminoacylated tmRNA acts like a tRNA, entering the A-site of stalled ribosomes, displacing the stalled mRNA. The ribosome then switches to translate the ORF on the tmRNA; the nascent peptide is terminated with the 'tag peptide' encoded by the tmRNA and targeted for degradation. The ribosome is freed to recommence translation, which seems to be the essential function of trans-translation. Required for trans-translation. Probably required for sporulation; deletion of the gene for tmRNA impairs sporulation via its effect on trans-translation, and as smpB is required for trans-translation under non-stress conditions, it is also probably required during sporulation. The polypeptide is SsrA-binding protein (Bacillus subtilis (strain 168)).